Here is a 139-residue protein sequence, read N- to C-terminus: MAMTVHCDIVSAEGEIFSGLVEMVVAHGNLGDLGIAPGHAPLITNLKPGPITLTKQGGAQEVFYISGGFLEVQPNMVKVLADTVQRATDLDEAQAQEALKAAENALNLKGADFDYSAAAARLAEAAAQLRTVQQMRKGK.

It belongs to the ATPase epsilon chain family. In terms of assembly, F-type ATPases have 2 components, CF(1) - the catalytic core - and CF(0) - the membrane proton channel. CF(1) has five subunits: alpha(3), beta(3), gamma(1), delta(1), epsilon(1). CF(0) has three main subunits: a, b and c.

The protein localises to the cell inner membrane. Produces ATP from ADP in the presence of a proton gradient across the membrane. The protein is ATP synthase epsilon chain of Pseudomonas putida (strain ATCC 700007 / DSM 6899 / JCM 31910 / BCRC 17059 / LMG 24140 / F1).